The sequence spans 138 residues: Small ribosomal subunit protein uS12 (138 aa).

The interval 33 to 55 (KEHTNVSSPQKRGVCTRVGTMTP) is disordered.

This sequence belongs to the universal ribosomal protein uS12 family. In terms of assembly, part of the 30S ribosomal subunit. Contacts proteins S8 and S17. May interact with IF1 in the 30S initiation complex. Interacts with BrxC.

In terms of biological role, with S4 and S5 plays an important role in translational accuracy. Interacts with and stabilizes bases of the 16S rRNA that are involved in tRNA selection in the A site and with the mRNA backbone. Located at the interface of the 30S and 50S subunits, it traverses the body of the 30S subunit contacting proteins on the other side and probably holding the rRNA structure together. The combined cluster of proteins S8, S12 and S17 appears to hold together the shoulder and platform of the 30S subunit. This Bacillus subtilis (strain 168) protein is Small ribosomal subunit protein uS12 (rpsL).